The chain runs to 406 residues: MRRVVITGIGIVSSIGNNKKEVLASLYKGVSGIVSSEEMKKLGMRSAVWGNIKLESINIITQKLSRFMNNASRYSFVAMMEAIKDAKIDREYYQKNPRVGLISGSGCSFSKNTLTSDIHLMKNKHISKGISPYLAVKTMPSGISACLSTLFKIYGVTYSISSACATSAHCIGNAFELIQFGRQDLIFAGGGEEISLELAMQFDAMRALSTCFNNDPKKASRVYDVYRDGFVISGGAGMLVIEELNSALSRSAYIYAEIIGYAATSDGSNIVVPSGDGAIRCMNLARKGKNIPIDYLNVHGTGTKIGDLIELEAIRKVFLNEKKPMISATKSMTGHGLGASGVHEMIYTLLMLKYNFIAPTINIENLEPCAENMNIIQKTTNIEINTAMSNSFGFGGTNVSLIVKKY.

A Ketosynthase family 3 (KS3) domain is found at 1–405; sequence MRRVVITGIG…GTNVSLIVKK (405 aa). Active-site for beta-ketoacyl synthase activity residues include cysteine 164, histidine 299, and histidine 335.

This sequence belongs to the thiolase-like superfamily. Beta-ketoacyl-ACP synthases family. As to quaternary structure, homodimer.

Its subcellular location is the cytoplasm. It catalyses the reaction a fatty acyl-[ACP] + malonyl-[ACP] + H(+) = a 3-oxoacyl-[ACP] + holo-[ACP] + CO2. The catalysed reaction is (3Z)-decenoyl-[ACP] + malonyl-[ACP] + H(+) = 3-oxo-(5Z)-dodecenoyl-[ACP] + holo-[ACP] + CO2. The protein operates within lipid metabolism; fatty acid biosynthesis. Involved in the type II fatty acid elongation cycle. Catalyzes the elongation of a wide range of acyl-ACP by the addition of two carbons from malonyl-ACP to an acyl acceptor. Can also use unsaturated fatty acids. Catalyzes a key reaction in unsaturated fatty acid (UFA) synthesis, the elongation of the cis-3-decenoyl-ACP produced by FabA. This Buchnera aphidicola subsp. Acyrthosiphon pisum (strain APS) (Acyrthosiphon pisum symbiotic bacterium) protein is 3-oxoacyl-[acyl-carrier-protein] synthase 1 (fabB).